The following is a 100-amino-acid chain: Putative pterin-4-alpha-carbinolamine dehydratase (100 aa).

Belongs to the pterin-4-alpha-carbinolamine dehydratase family.

The enzyme catalyses (4aS,6R)-4a-hydroxy-L-erythro-5,6,7,8-tetrahydrobiopterin = (6R)-L-erythro-6,7-dihydrobiopterin + H2O. The protein is Putative pterin-4-alpha-carbinolamine dehydratase of Alteromonas mediterranea (strain DSM 17117 / CIP 110805 / LMG 28347 / Deep ecotype).